Here is a 148-residue protein sequence, read N- to C-terminus: Large ribosomal subunit protein uL13 (148 aa).

Belongs to the universal ribosomal protein uL13 family. As to quaternary structure, part of the 50S ribosomal subunit.

This protein is one of the early assembly proteins of the 50S ribosomal subunit, although it is not seen to bind rRNA by itself. It is important during the early stages of 50S assembly. The sequence is that of Large ribosomal subunit protein uL13 from Sulfolobus acidocaldarius (strain ATCC 33909 / DSM 639 / JCM 8929 / NBRC 15157 / NCIMB 11770).